A 268-amino-acid polypeptide reads, in one-letter code: Undecaprenyl-diphosphatase (268 aa).

A run of 7 helical transmembrane segments spans residues 41 to 61, 81 to 101, 106 to 126, 146 to 166, 191 to 211, 213 to 233, and 245 to 265; these read LAYS…LIYF, WLTY…PLYM, YLLL…AVIF, MTLG…LPGI, FVLV…SEGG, VATP…LVTI, and VTLV…TRIL.

It belongs to the UppP family.

The protein resides in the cell membrane. The catalysed reaction is di-trans,octa-cis-undecaprenyl diphosphate + H2O = di-trans,octa-cis-undecaprenyl phosphate + phosphate + H(+). Functionally, catalyzes the dephosphorylation of undecaprenyl diphosphate (UPP). In Pyrobaculum islandicum (strain DSM 4184 / JCM 9189 / GEO3), this protein is Undecaprenyl-diphosphatase.